We begin with the raw amino-acid sequence, 455 residues long: Argininosuccinate lyase (455 aa).

The protein belongs to the lyase 1 family. Argininosuccinate lyase subfamily.

It is found in the cytoplasm. It carries out the reaction 2-(N(omega)-L-arginino)succinate = fumarate + L-arginine. The protein operates within amino-acid biosynthesis; L-arginine biosynthesis; L-arginine from L-ornithine and carbamoyl phosphate: step 3/3. The chain is Argininosuccinate lyase from Caulobacter sp. (strain K31).